The following is a 1416-amino-acid chain: DNA-directed RNA polymerase subunit beta (1416 aa).

Belongs to the RNA polymerase beta chain family. As to quaternary structure, in plastids the minimal PEP RNA polymerase catalytic core is composed of four subunits: alpha, beta, beta', and beta''. When a (nuclear-encoded) sigma factor is associated with the core the holoenzyme is formed, which can initiate transcription.

Its subcellular location is the plastid. The protein resides in the chloroplast. It catalyses the reaction RNA(n) + a ribonucleoside 5'-triphosphate = RNA(n+1) + diphosphate. In terms of biological role, DNA-dependent RNA polymerase catalyzes the transcription of DNA into RNA using the four ribonucleoside triphosphates as substrates. The chain is DNA-directed RNA polymerase subunit beta from Oltmannsiellopsis viridis (Marine flagellate).